The following is a 160-amino-acid chain: Peptide methionine sulfoxide reductase MsrA (160 aa).

The active site involves Cys-11.

The protein belongs to the MsrA Met sulfoxide reductase family.

It carries out the reaction L-methionyl-[protein] + [thioredoxin]-disulfide + H2O = L-methionyl-(S)-S-oxide-[protein] + [thioredoxin]-dithiol. It catalyses the reaction [thioredoxin]-disulfide + L-methionine + H2O = L-methionine (S)-S-oxide + [thioredoxin]-dithiol. In terms of biological role, has an important function as a repair enzyme for proteins that have been inactivated by oxidation. Catalyzes the reversible oxidation-reduction of methionine sulfoxide in proteins to methionine. The chain is Peptide methionine sulfoxide reductase MsrA from Malacoplasma penetrans (strain HF-2) (Mycoplasma penetrans).